Consider the following 44-residue polypeptide: pyr operon leader peptide (44 aa).

This is pyr operon leader peptide (pyrL) from Escherichia coli O157:H7.